Consider the following 485-residue polypeptide: Glycogen synthase (485 aa).

Residue Lys20 participates in ADP-alpha-D-glucose binding.

The protein belongs to the glycosyltransferase 1 family. Bacterial/plant glycogen synthase subfamily.

It catalyses the reaction [(1-&gt;4)-alpha-D-glucosyl](n) + ADP-alpha-D-glucose = [(1-&gt;4)-alpha-D-glucosyl](n+1) + ADP + H(+). It functions in the pathway glycan biosynthesis; glycogen biosynthesis. Functionally, synthesizes alpha-1,4-glucan chains using ADP-glucose. This is Glycogen synthase from Vibrio vulnificus (strain CMCP6).